Consider the following 149-residue polypeptide: Small ribosomal subunit protein uS17c (149 aa).

A chloroplast-targeting transit peptide spans 1–49 (MITSSLTSSLQALKLSSPFAHGSTPLSSLSKPNSFPNHRMPALVPVIRA).

Belongs to the universal ribosomal protein uS17 family. In terms of assembly, part of the 30S ribosomal subunit.

It localises to the plastid. Its subcellular location is the chloroplast. Functionally, one of the primary rRNA binding proteins, it binds specifically to the 5'-end of 16S ribosomal RNA. Required for optimal plastid performance in terms of photosynthesis and growth. Required for the translation of plastid mRNAs. Plays a critical role in biosynthesis of thylakoid membrane proteins encoded by chloroplast genes. The chain is Small ribosomal subunit protein uS17c (RPS17) from Arabidopsis thaliana (Mouse-ear cress).